The sequence spans 81 residues: Photosystem I iron-sulfur center (81 aa).

2 consecutive 4Fe-4S ferredoxin-type domains span residues 2–31 and 39–68; these read SHIV…MVPW and MASA…VRVY. [4Fe-4S] cluster is bound by residues cysteine 11, cysteine 14, cysteine 17, cysteine 21, cysteine 48, cysteine 51, cysteine 54, and cysteine 58.

The eukaryotic PSI reaction center is composed of at least 11 subunits. The cofactor is [4Fe-4S] cluster.

It localises to the plastid. It is found in the chloroplast thylakoid membrane. It catalyses the reaction reduced [plastocyanin] + hnu + oxidized [2Fe-2S]-[ferredoxin] = oxidized [plastocyanin] + reduced [2Fe-2S]-[ferredoxin]. Apoprotein for the two 4Fe-4S centers FA and FB of photosystem I (PSI); essential for photochemical activity. FB is the terminal electron acceptor of PSI, donating electrons to ferredoxin. The C-terminus interacts with PsaA/B/D and helps assemble the protein into the PSI complex. Required for binding of PsaD and PsaE to PSI. PSI is a plastocyanin/cytochrome c6-ferredoxin oxidoreductase, converting photonic excitation into a charge separation, which transfers an electron from the donor P700 chlorophyll pair to the spectroscopically characterized acceptors A0, A1, FX, FA and FB in turn. The protein is Photosystem I iron-sulfur center of Stigeoclonium helveticum (Green alga).